A 338-amino-acid chain; its full sequence is DNA-directed RNA polymerase subunit alpha (338 aa).

Residues 1-234 (MIHKNWQELI…DQLSIFVNFD (234 aa)) are alpha N-terminal domain (alpha-NTD). The interval 250-338 (FNPLLLKKVD…ELAKKYEDNF (89 aa)) is alpha C-terminal domain (alpha-CTD).

Belongs to the RNA polymerase alpha chain family. As to quaternary structure, homodimer. The RNAP catalytic core consists of 2 alpha, 1 beta, 1 beta' and 1 omega subunit. When a sigma factor is associated with the core the holoenzyme is formed, which can initiate transcription.

The enzyme catalyses RNA(n) + a ribonucleoside 5'-triphosphate = RNA(n+1) + diphosphate. In terms of biological role, DNA-dependent RNA polymerase catalyzes the transcription of DNA into RNA using the four ribonucleoside triphosphates as substrates. In Jannaschia sp. (strain CCS1), this protein is DNA-directed RNA polymerase subunit alpha.